A 197-amino-acid polypeptide reads, in one-letter code: dITP/XTP pyrophosphatase (197 aa).

Position 10–15 (S10–K15) interacts with substrate. E41 and D70 together coordinate Mg(2+). D70 functions as the Proton acceptor in the catalytic mechanism. Substrate is bound by residues S71, F154–D157, K177, and H182–R183.

It belongs to the HAM1 NTPase family. As to quaternary structure, homodimer. It depends on Mg(2+) as a cofactor.

It catalyses the reaction XTP + H2O = XMP + diphosphate + H(+). The enzyme catalyses dITP + H2O = dIMP + diphosphate + H(+). It carries out the reaction ITP + H2O = IMP + diphosphate + H(+). In terms of biological role, pyrophosphatase that catalyzes the hydrolysis of nucleoside triphosphates to their monophosphate derivatives, with a high preference for the non-canonical purine nucleotides XTP (xanthosine triphosphate), dITP (deoxyinosine triphosphate) and ITP. Seems to function as a house-cleaning enzyme that removes non-canonical purine nucleotides from the nucleotide pool, thus preventing their incorporation into DNA/RNA and avoiding chromosomal lesions. This is dITP/XTP pyrophosphatase from Pseudomonas syringae pv. tomato (strain ATCC BAA-871 / DC3000).